The sequence spans 425 residues: AFP homolog 2 (425 aa).

Disordered regions lie at residues 1–207 (MDDD…SGTE) and 288–327 (PFAG…DNSN). The necessary and sufficient for the interaction with TOPLESS stretch occupies residues 7–17 (LELSLGLSCGG). The span at 20–34 (GKAKGNNNNNAGSSS) shows a compositional bias: low complexity. Over residues 37 to 54 (YRAEGGDRSAKVIDDFKN) the composition is skewed to basic and acidic residues. A compositionally biased stretch (low complexity) spans 66-81 (PSSGSQRSDSGQQPPQ). The segment covering 124–140 (NDDKKKEKDSSHVDMHE) has biased composition (basic and acidic residues). Composition is skewed to polar residues over residues 146–158 (SHVS…GSTA), 185–197 (TDTN…TGQR), and 288–299 (PFAGRVPSNSAT). Residues 322–425 (TGDNSNLNTA…MGMTAASAHT (104 aa)) are necessary and sufficient for the interaction with the JAZ proteins.

Belongs to the Ninja family. In terms of assembly, component of a complex at least composed of TOPLESS, TPR2, TPR3, TIFY4B/PPD2, MYC3/ATR2 and TIFY3B/JAZ12. Interacts (via C-terminus) with TIFY10A/JAZ1; TIFY10B/JAZ2; TIFY6B/JAZ3; TIFY6A/JAZ4; TIFY11A/JAZ5; TIFY11B/JAZ6; TIFY7/JAZ9; TIFY9/JAZ10; TIFY3A/JAZ11; TIFY3B/JAZ12; TIFY4A/PPD1; TIFY4B/PPD2 and TIFY8 (via TIFY domain). Interacts with TOPLESS. Interacts with PAT1H1.

It is found in the nucleus. Its function is as follows. Acts as a transcriptional repressor. Negative regulator of jasmonate responses. Connects the JAZ proteins and the non-JAZ protein TIFY8 with the TOPLESS corepressors. The sequence is that of AFP homolog 2 from Arabidopsis thaliana (Mouse-ear cress).